The following is a 97-amino-acid chain: Signal recognition particle 19 kDa protein (97 aa).

The protein belongs to the SRP19 family. In terms of assembly, part of the signal recognition particle protein translocation system, which is composed of SRP and FtsY. Archaeal SRP consists of a 7S RNA molecule of 300 nucleotides and two protein subunits: SRP54 and SRP19.

It is found in the cytoplasm. Functionally, involved in targeting and insertion of nascent membrane proteins into the cytoplasmic membrane. Binds directly to 7S RNA and mediates binding of the 54 kDa subunit of the SRP. This is Signal recognition particle 19 kDa protein from Pyrobaculum calidifontis (strain DSM 21063 / JCM 11548 / VA1).